The primary structure comprises 116 residues: MTVKKVTRLRRARKARLKMHELEVVRLCVHRSSQHIYAQVISADGSKVLASASTLDKELRDGATGNIDAATKVGKLVAERAKAAGVSQVAFDRSGFKYHGRVKALADAAREGGLEF.

It belongs to the universal ribosomal protein uL18 family. Part of the 50S ribosomal subunit; part of the 5S rRNA/L5/L18/L25 subcomplex. Contacts the 5S and 23S rRNAs.

In terms of biological role, this is one of the proteins that bind and probably mediate the attachment of the 5S RNA into the large ribosomal subunit, where it forms part of the central protuberance. The polypeptide is Large ribosomal subunit protein uL18 (Pseudomonas syringae pv. tomato (strain ATCC BAA-871 / DC3000)).